A 376-amino-acid chain; its full sequence is tRNA(Met) cytidine acetate ligase (376 aa).

ATP contacts are provided by residues Ile-7–Gln-20, Gly-102, Asn-160, and Arg-181.

The protein belongs to the TmcAL family.

The protein localises to the cytoplasm. The enzyme catalyses cytidine(34) in elongator tRNA(Met) + acetate + ATP = N(4)-acetylcytidine(34) in elongator tRNA(Met) + AMP + diphosphate. Catalyzes the formation of N(4)-acetylcytidine (ac(4)C) at the wobble position of elongator tRNA(Met), using acetate and ATP as substrates. First activates an acetate ion to form acetyladenylate (Ac-AMP) and then transfers the acetyl group to tRNA to form ac(4)C34. The protein is tRNA(Met) cytidine acetate ligase of Exiguobacterium sp. (strain ATCC BAA-1283 / AT1b).